The chain runs to 430 residues: Keratin, type I cytoskeletal 18 (430 aa).

S2 is subject to N-acetylserine. The tract at residues 2-79 is head; that stretch reads SFTTRSTFST…GLAGMGGIQN (78 aa). Phosphoserine occurs at positions 7, 10, 15, and 18. Phosphoserine; alternate occurs at positions 30 and 31. 2 O-linked (GlcNAc) serine; alternate glycosylation sites follow: S30 and S31. Residue S34 is modified to Phosphoserine; by CDK1. Position 36 is a phosphotyrosine (Y36). Residue S42 is modified to Phosphoserine. R45 is subject to Omega-N-methylarginine. S49 bears the Phosphoserine; alternate mark. O-linked (GlcNAc) serine; alternate glycosylation occurs at S49. S51 carries the phosphoserine; by MAPKAPK2 and MAPKAPK3 modification. A Phosphothreonine modification is found at T52. The residue at position 53 (S53) is a Phosphoserine; by CAMK, PKC/PRKCE and AURKA. The residue at position 55 (R55) is an Omega-N-methylarginine. Phosphoserine is present on S60. T65 bears the Phosphothreonine mark. Positions 70-373 are necessary for interaction with PNN; sequence GLAGMGGIQN…EALLNIKVKL (304 aa). Residues 77–128 are interaction with TRADD; sequence IQNEKETMQSLNDRLASYLDRVRSLETENRRLESKIREHLEKKGPQVRDWSH. Positions 80 to 115 are coil 1A; it reads EKETMQSLNDRLASYLDRVRSLETENRRLESKIREH. An IF rod domain is found at 80–391; that stretch reads EKETMQSLND…RLLEDGEDFN (312 aa). K81 participates in a covalent cross-link: Glycyl lysine isopeptide (Lys-Gly) (interchain with G-Cter in SUMO2). 2 positions are modified to phosphoserine: S93 and S100. The segment at 116–132 is linker 1; sequence LEKKGPQVRDWSHYFKI. K131 is modified (N6-acetyllysine). Residues 133–224 form a coil 1B region; it reads IEDLRAQIFA…KNHEEEVKGL (92 aa). A Phosphoserine modification is found at S177. The segment at 225–248 is linker 12; it reads QAQIASSGLTVEVDAPKSQDLAKI. Residues 243 to 391 form an interaction with DNAJB6 region; that stretch reads QDLAKIMADI…RLLEDGEDFN (149 aa). Residue K247 forms a Glycyl lysine isopeptide (Lys-Gly) (interchain with G-Cter in SUMO2) linkage. Positions 249 to 387 are coil 2; sequence MADIRAQYDE…ATYRRLLEDG (139 aa). The residue at position 302 (T302) is a Phosphothreonine. A phosphoserine mark is found at S305, S319, and S323. Glycyl lysine isopeptide (Lys-Gly) (interchain with G-Cter in SUMO2) cross-links involve residues K370 and K372. The interval 388-430 is tail; the sequence is EDFNLGDALDSSNSMQTIQKTTTRRIVDGKVVSETNDTKVLRH. S398, S399, and S401 each carry phosphoserine. Phosphothreonine is present on T404. A Glycyl lysine isopeptide (Lys-Gly) (interchain with G-Cter in SUMO2) cross-link involves residue K417. Residue K426 is modified to N6-acetyllysine; alternate. K426 is covalently cross-linked (Glycyl lysine isopeptide (Lys-Gly) (interchain with G-Cter in SUMO1); alternate). K426 is covalently cross-linked (Glycyl lysine isopeptide (Lys-Gly) (interchain with G-Cter in SUMO2); alternate).

It belongs to the intermediate filament family. In terms of assembly, heterotetramer of two type I and two type II keratins. KRT18 associates with KRT8. Interacts with PLEC isoform 1C, when in a heterodimer with KRT8. Interacts with the thrombin-antithrombin complex. Interacts with PNN and mutated CFTR. Interacts with YWHAE, YWHAH and YWHAZ only when phosphorylated. Interacts with DNAJB6, TCHP and TRADD. Interacts with FAM83H. Interacts with EPPK1. Interacts with PKP1 and PKP2. As to quaternary structure, (Microbial infection) Interacts with hepatitis C virus/HCV core protein. Phosphorylation at Ser-34 increases during mitosis. Hyperphosphorylated at Ser-53 in diseased cirrhosis liver. Phosphorylation increases by IL-6. In terms of processing, proteolytically cleaved by caspases during epithelial cell apoptosis. Cleavage occurs at Asp-238 by either caspase-3, caspase-6 or caspase-7. Post-translationally, O-GlcNAcylation increases solubility, and decreases stability by inducing proteasomal degradation. In terms of tissue distribution, expressed in colon, placenta, liver and very weakly in exocervix. Increased expression observed in lymph nodes of breast carcinoma.

It localises to the nucleus matrix. The protein resides in the cytoplasm. It is found in the perinuclear region. Its subcellular location is the nucleus. The protein localises to the nucleolus. Involved in the uptake of thrombin-antithrombin complexes by hepatic cells. When phosphorylated, plays a role in filament reorganization. Involved in the delivery of mutated CFTR to the plasma membrane. Together with KRT8, is involved in interleukin-6 (IL-6)-mediated barrier protection. The polypeptide is Keratin, type I cytoskeletal 18 (KRT18) (Homo sapiens (Human)).